A 313-amino-acid polypeptide reads, in one-letter code: Protein PHOSPHATE-INDUCED 1 (313 aa).

The first 22 residues, 1-22, serve as a signal peptide directing secretion; that stretch reads MATSHFILKLFLVISFCNVCFA. Residue Asn119 is glycosylated (N-linked (GlcNAc...) asparagine).

This sequence belongs to the EXORDIUM family.

The protein resides in the secreted. It is found in the extracellular space. It localises to the apoplast. In terms of biological role, may be involved in the regulation of cell division. The polypeptide is Protein PHOSPHATE-INDUCED 1 (Nicotiana tabacum (Common tobacco)).